The chain runs to 1036 residues: Protein smoothened (1036 aa).

The N-terminal stretch at Met-1–Ala-31 is a signal peptide. The Extracellular portion of the chain corresponds to Ser-32 to Leu-258. N-linked (GlcNAc...) asparagine glycosylation is found at Asn-55 and Asn-95. The 122-residue stretch at Val-85–Gly-206 folds into the FZ domain. Disulfide bonds link Cys-90–Cys-155, Cys-100–Cys-148, Cys-139–Cys-179, and Cys-172–Cys-194. 3 N-linked (GlcNAc...) asparagine glycosylation sites follow: Asn-184, Asn-195, and Asn-213. Intrachain disulfides connect Cys-218/Cys-238 and Cys-242/Cys-320. The chain crosses the membrane as a helical span at residues Ile-259–Ile-279. At Asp-280–Tyr-287 the chain is on the cytoplasmic side. A helical transmembrane segment spans residues Pro-288–Leu-308. The Extracellular segment spans residues Gln-309–Cys-339. N-linked (GlcNAc...) asparagine glycosylation occurs at Asn-336. The cysteines at positions 339 and 413 are disulfide-linked. The chain crosses the membrane as a helical span at residues Ile-340–Leu-360. Residues Thr-361–Ser-381 lie on the Cytoplasmic side of the membrane. The chain crosses the membrane as a helical span at residues Tyr-382–Ser-402. The Extracellular segment spans residues Glu-403–Ser-421. Asn-419 is a glycosylation site (N-linked (GlcNAc...) asparagine). Residues Met-422–Ile-442 traverse the membrane as a helical segment. The Cytoplasmic portion of the chain corresponds to Thr-443–His-469. Residues Leu-470–Ile-490 traverse the membrane as a helical segment. The Extracellular segment spans residues Ala-491–Ser-532. Cys-513 and Cys-525 are oxidised to a cystine. Residues Val-533–Trp-553 form a helical membrane-spanning segment. Topologically, residues Cys-554–Lys-1036 are cytoplasmic. 8 positions are modified to phosphoserine: Ser-658, Ser-659, Ser-667, Ser-670, Ser-673, Ser-687, Ser-690, and Ser-693. Disordered stretches follow at residues His-678 to Glu-745 and Ile-870 to Ala-902. Over residues Arg-880–Lys-899 the composition is skewed to basic residues.

It belongs to the G-protein coupled receptor Fz/Smo family. In terms of assembly, interacts with cos. Phosphorylation by CkIalpha and PKA regulates smo accumulation at the cell surface and its signaling activity in response to hh. In terms of tissue distribution, expressed in olfactory sensory neurons (at protein level).

Its subcellular location is the cell membrane. It is found in the cell projection. It localises to the cilium. In terms of biological role, segment polarity protein required for correct patterning of every segment. G protein-coupled receptor which associates with the patched protein (ptc) to transduce the hedgehog (hh) signal through the activation of an inhibitory G-protein. In the absence of hh, ptc represses the constitutive signaling activity of smo through fused (fu). Essential component of a hh-signaling pathway which regulates the Duox-dependent gut immune response to bacterial uracil; required to activate Cad99C-dependent endosome formation, norpA-dependent Ca2+ mobilization and p38 MAPK, which are essential steps in the Duox-dependent production of reactive oxygen species (ROS) in response to intestinal bacterial infection. The chain is Protein smoothened (smo) from Drosophila melanogaster (Fruit fly).